Reading from the N-terminus, the 870-residue chain is Aminopeptidase N (870 aa).

Residues Glu121 and 261–265 contribute to the substrate site; that span reads GAMEN. His297 contacts Zn(2+). The Proton acceptor role is filled by Glu298. Zn(2+) contacts are provided by His301 and Glu320.

It belongs to the peptidase M1 family. Requires Zn(2+) as cofactor.

It localises to the cell inner membrane. The enzyme catalyses Release of an N-terminal amino acid, Xaa-|-Yaa- from a peptide, amide or arylamide. Xaa is preferably Ala, but may be most amino acids including Pro (slow action). When a terminal hydrophobic residue is followed by a prolyl residue, the two may be released as an intact Xaa-Pro dipeptide.. Functionally, aminopeptidase N is involved in the degradation of intracellular peptides generated by protein breakdown during normal growth as well as in response to nutrient starvation. The protein is Aminopeptidase N (pepN) of Escherichia coli (strain K12).